Reading from the N-terminus, the 230-residue chain is Small ribosomal subunit protein uS3 (230 aa).

Residues 39-107 (VRNYLFKKLI…PVHINIEEIK (69 aa)) enclose the KH type-2 domain.

It belongs to the universal ribosomal protein uS3 family. Part of the 30S ribosomal subunit. Forms a tight complex with proteins S10 and S14.

Functionally, binds the lower part of the 30S subunit head. Binds mRNA in the 70S ribosome, positioning it for translation. This chain is Small ribosomal subunit protein uS3, found in Vesicomyosocius okutanii subsp. Calyptogena okutanii (strain HA).